The sequence spans 174 residues: UPF0398 protein YfdB (174 aa).

The protein belongs to the UPF0398 family.

The polypeptide is UPF0398 protein YfdB (yfdB) (Lactococcus lactis subsp. lactis (strain IL1403) (Streptococcus lactis)).